Here is a 561-residue protein sequence, read N- to C-terminus: Delta(24)-sterol reductase (561 aa).

Topologically, residues 1–25 (MSDLQTPLVRPKRKKTWVDYFVKFR) are lumenal. Serine 2 carries the phosphoserine modification. Residues 26–46 (WIIVIFIVLPFSATFYFLIYL) traverse the membrane as a helical; Signal-anchor segment. The Cytoplasmic portion of the chain corresponds to 47-561 (GDMWSESKSF…HLETAYAEAD (515 aa)). The 184-residue stretch at 49–232 (MWSESKSFEK…VAAEIRLIKV (184 aa)) folds into the FAD-binding PCMH-type domain. The interval 518-539 (CRKKYRAIGTFMSVYYKSKKGR) is interaction with calmodulin.

This sequence belongs to the DIMINUTO family. As to quaternary structure, interacts with calmodulin.

The protein localises to the microsome membrane. The catalysed reaction is lathosterol + NADP(+) = 5alpha-cholesta-7,24-dien-3beta-ol + NADPH + H(+). Plays a critical role in the general process of plant cell elongation. Involved in the synthesis of campesterol, an early precursor of brassinolide. Required for the conversion of 24-methylenecholesterol to campesterol and for the conversion of isofucosterol to sitosterol. Necessary for both the isomerization and reduction of 24-methylenecholesterol. Regulates indirectly phytochrome-mediated light responses through the modulation of brassinosteroid biosynthesis. This chain is Delta(24)-sterol reductase (DIM), found in Arabidopsis thaliana (Mouse-ear cress).